The sequence spans 382 residues: 2-epi-valiolone synthase (382 aa).

NAD(+)-binding positions include 92-95, 124-128, 148-149, Lys161, Lys170, and 188-191; these read EKSK, GVVVD, TT, and HLRT. The Zn(2+) site is built by Glu203, His266, and His283.

Belongs to the sugar phosphate cyclases superfamily. EVS family. NAD(+) serves as cofactor. The cofactor is Co(2+). Zn(2+) is required as a cofactor.

It carries out the reaction D-sedoheptulose 7-phosphate = 2-epi-valiolone + phosphate. Its function is as follows. Catalyzes the conversion of sedoheptulose 7-phosphate to 2-epi-valiolone, which may serve as an alternative precursor for aminocyclitol biosynthesis. The chain is 2-epi-valiolone synthase from Actinosynnema mirum (strain ATCC 29888 / DSM 43827 / JCM 3225 / NBRC 14064 / NCIMB 13271 / NRRL B-12336 / IMRU 3971 / 101).